The following is a 205-amino-acid chain: Holliday junction branch migration complex subunit RuvA (205 aa).

The domain I stretch occupies residues 1-64 (MIGKLKGTID…EDQLKLFGFL (64 aa)). Residues 65–143 (SALEREWFRL…AFSGEMAPSI (79 aa)) form a domain II region. Residues 144–153 (GLKQELGEGV) are flexible linker. The segment at 153-205 (VAAAPVADAVSALTNLGYSRDQAANAVAAALKNGGEGGDSAKLIRLGLKELSR) is domain III.

This sequence belongs to the RuvA family. As to quaternary structure, homotetramer. Forms an RuvA(8)-RuvB(12)-Holliday junction (HJ) complex. HJ DNA is sandwiched between 2 RuvA tetramers; dsDNA enters through RuvA and exits via RuvB. An RuvB hexamer assembles on each DNA strand where it exits the tetramer. Each RuvB hexamer is contacted by two RuvA subunits (via domain III) on 2 adjacent RuvB subunits; this complex drives branch migration. In the full resolvosome a probable DNA-RuvA(4)-RuvB(12)-RuvC(2) complex forms which resolves the HJ.

The protein resides in the cytoplasm. Its function is as follows. The RuvA-RuvB-RuvC complex processes Holliday junction (HJ) DNA during genetic recombination and DNA repair, while the RuvA-RuvB complex plays an important role in the rescue of blocked DNA replication forks via replication fork reversal (RFR). RuvA specifically binds to HJ cruciform DNA, conferring on it an open structure. The RuvB hexamer acts as an ATP-dependent pump, pulling dsDNA into and through the RuvAB complex. HJ branch migration allows RuvC to scan DNA until it finds its consensus sequence, where it cleaves and resolves the cruciform DNA. This Rhizobium meliloti (strain 1021) (Ensifer meliloti) protein is Holliday junction branch migration complex subunit RuvA.